The sequence spans 692 residues: Putative ESX-1 scaffolding and assembly protein SaeA (692 aa).

Residues 1-21 show a composition bias toward basic and acidic residues; it reads MGERGELVSDLHPSDDHDADP. Disordered regions lie at residues 1–23 and 87–134; these read MGER…DPRL and PAAP…TTGF. A compositionally biased stretch (pro residues) spans 89 to 107; the sequence is APEPDPPPVPEPQPEPEPG.

In terms of biological role, may be involved in assembly of the ESX-1 / type VII specialized secretion system (T7SS), which exports several proteins including EsxA and EsxB. Involved in DNA conjugation in recipient (MKD8) but not donor (mc(2)155) strain. This Mycolicibacterium smegmatis (strain MKD8) (Mycobacterium smegmatis) protein is Putative ESX-1 scaffolding and assembly protein SaeA (saeA).